Reading from the N-terminus, the 336-residue chain is Pyridoxal 5'-phosphate synthase subunit PdxS (336 aa).

Asp30 lines the D-ribose 5-phosphate pocket. The active-site Schiff-base intermediate with D-ribose 5-phosphate is Lys87. Gly159 is a binding site for D-ribose 5-phosphate. A D-glyceraldehyde 3-phosphate-binding site is contributed by Arg171. D-ribose 5-phosphate is bound by residues Gly257 and 278–279 (GS).

Belongs to the PdxS/SNZ family. In the presence of PdxT, forms a dodecamer of heterodimers.

The catalysed reaction is aldehydo-D-ribose 5-phosphate + D-glyceraldehyde 3-phosphate + L-glutamine = pyridoxal 5'-phosphate + L-glutamate + phosphate + 3 H2O + H(+). It functions in the pathway cofactor biosynthesis; pyridoxal 5'-phosphate biosynthesis. In terms of biological role, catalyzes the formation of pyridoxal 5'-phosphate from ribose 5-phosphate (RBP), glyceraldehyde 3-phosphate (G3P) and ammonia. The ammonia is provided by the PdxT subunit. Can also use ribulose 5-phosphate and dihydroxyacetone phosphate as substrates, resulting from enzyme-catalyzed isomerization of RBP and G3P, respectively. The sequence is that of Pyridoxal 5'-phosphate synthase subunit PdxS from Thermoplasma volcanium (strain ATCC 51530 / DSM 4299 / JCM 9571 / NBRC 15438 / GSS1).